A 571-amino-acid polypeptide reads, in one-letter code: Proline-rich protein 35 (571 aa).

Disordered stretches follow at residues 1–27, 79–187, 286–402, and 476–571; these read MSRE…PHYI, GSTT…EGSV, APVS…GSPE, and GPQA…GAEV. Positions 16–26 are enriched in basic residues; the sequence is ARSRKPKKPHY. Residues 165–175 are compositionally biased toward gly residues; the sequence is GMGGDPRGVGA. Positions 316 to 336 are enriched in basic and acidic residues; sequence TPRDPGQEGELERAAQSDPRR. Polar residues predominate over residues 351–367; that stretch reads PSLTRFCSRSSLPTGSS. The segment covering 380–399 has biased composition (pro residues); the sequence is PETPGPEGPLPLQPRGPVPG.

This Homo sapiens (Human) protein is Proline-rich protein 35 (PRR35).